We begin with the raw amino-acid sequence, 42 residues long: Lebocin-like anionic peptide 1 (42 aa).

As to expression, hemolymph.

The protein localises to the secreted. Antimicrobial protein. Has antibacterial activity against the Gram-positive bacteria M.luteus (MIC=22.7 uM) and L.monocytogenes (MIC=90.9 uM). Lacks antibacterial activity against the Gram-positive bacteria B.circulans, S.aureus, and S.lutea, and the Gram-negative bacteria E.coli D31, E.coli ATCC 25922, and S.typhimurium. Has antifungal activity against A.niger (MIC=90.9 uM) and T.harzianum (MIC=90.9 uM), but lacks antifungal activity against S.cerevisiae, P.pastoris, Z.marxianus, C.albicans, C.fructus, and F.oxysporum. In Galleria mellonella (Greater wax moth), this protein is Lebocin-like anionic peptide 1.